The primary structure comprises 229 residues: Uracil-DNA glycosylase (229 aa).

The active-site Proton acceptor is the Asp70.

The protein belongs to the uracil-DNA glycosylase (UDG) superfamily. UNG family.

Its subcellular location is the cytoplasm. It carries out the reaction Hydrolyzes single-stranded DNA or mismatched double-stranded DNA and polynucleotides, releasing free uracil.. Excises uracil residues from the DNA which can arise as a result of misincorporation of dUMP residues by DNA polymerase or due to deamination of cytosine. The protein is Uracil-DNA glycosylase of Chlamydia trachomatis serovar L2b (strain UCH-1/proctitis).